A 236-amino-acid polypeptide reads, in one-letter code: Leucyl/phenylalanyl-tRNA--protein transferase (236 aa).

It belongs to the L/F-transferase family.

Its subcellular location is the cytoplasm. The catalysed reaction is N-terminal L-lysyl-[protein] + L-leucyl-tRNA(Leu) = N-terminal L-leucyl-L-lysyl-[protein] + tRNA(Leu) + H(+). The enzyme catalyses N-terminal L-arginyl-[protein] + L-leucyl-tRNA(Leu) = N-terminal L-leucyl-L-arginyl-[protein] + tRNA(Leu) + H(+). It carries out the reaction L-phenylalanyl-tRNA(Phe) + an N-terminal L-alpha-aminoacyl-[protein] = an N-terminal L-phenylalanyl-L-alpha-aminoacyl-[protein] + tRNA(Phe). Functionally, functions in the N-end rule pathway of protein degradation where it conjugates Leu, Phe and, less efficiently, Met from aminoacyl-tRNAs to the N-termini of proteins containing an N-terminal arginine or lysine. The protein is Leucyl/phenylalanyl-tRNA--protein transferase of Vibrio campbellii (strain ATCC BAA-1116).